Here is a 257-residue protein sequence, read N- to C-terminus: Tryptophan synthase alpha chain (257 aa).

Active-site proton acceptor residues include E47 and D58.

This sequence belongs to the TrpA family. As to quaternary structure, tetramer of two alpha and two beta chains.

It carries out the reaction (1S,2R)-1-C-(indol-3-yl)glycerol 3-phosphate + L-serine = D-glyceraldehyde 3-phosphate + L-tryptophan + H2O. It functions in the pathway amino-acid biosynthesis; L-tryptophan biosynthesis; L-tryptophan from chorismate: step 5/5. Its function is as follows. The alpha subunit is responsible for the aldol cleavage of indoleglycerol phosphate to indole and glyceraldehyde 3-phosphate. This is Tryptophan synthase alpha chain from Listeria welshimeri serovar 6b (strain ATCC 35897 / DSM 20650 / CCUG 15529 / CIP 8149 / NCTC 11857 / SLCC 5334 / V8).